An 83-amino-acid chain; its full sequence is Small ribosomal subunit protein bS16 (83 aa).

It belongs to the bacterial ribosomal protein bS16 family.

The sequence is that of Small ribosomal subunit protein bS16 from Shewanella halifaxensis (strain HAW-EB4).